Consider the following 148-residue polypeptide: uncharacterized protein (148 aa).

It belongs to the serpin family. Poxviruses subfamily.

This is an uncharacterized protein from Fowlpox virus (strain NVSL) (FPV).